The chain runs to 67 residues: MARITVEDCLNQIPNRFKLTLAATYRARELAQGHAPRLDSKDKPTVTALREIASGLTGLEMLRKVPT.

Belongs to the RNA polymerase subunit omega family. In terms of assembly, the RNAP catalytic core consists of 2 alpha, 1 beta, 1 beta' and 1 omega subunit. When a sigma factor is associated with the core the holoenzyme is formed, which can initiate transcription.

It carries out the reaction RNA(n) + a ribonucleoside 5'-triphosphate = RNA(n+1) + diphosphate. Functionally, promotes RNA polymerase assembly. Latches the N- and C-terminal regions of the beta' subunit thereby facilitating its interaction with the beta and alpha subunits. The protein is DNA-directed RNA polymerase subunit omega of Bordetella avium (strain 197N).